A 311-amino-acid polypeptide reads, in one-letter code: NEDD4 family-interacting protein 2 (311 aa).

Positions 1-133 (RRSASDAELS…PPYSSITVEA (133 aa)) are disordered. Topologically, residues 1–206 (RRSASDAELS…VEQLRVGNDG (206 aa)) are cytoplasmic. Residues 7 to 22 (AELSAGAEGATGSEAA) show a composition bias toward low complexity. Gly residues predominate over residues 26-37 (DLGGRTRGGGRG). Residues 38-47 (SAAAAATTST) are compositionally biased toward low complexity. A compositionally biased stretch (basic and acidic residues) spans 48-75 (REAEGAERRGDTPARKPDPEAGRMDHHQ). Residues 92-101 (ESSAVEQPST) are compositionally biased toward polar residues. Positions 102–120 (SSLAAPTVEAAASAPALDP) are enriched in low complexity. Residues 123-126 (PPPY) form an interaction with NEDD4 region. Residues 123–126 (PPPY) carry the PPxY motif 1 motif. 4 positions are modified to phosphotyrosine; by SRC: Y126, Y142, Y146, and Y152. 2 short sequence motifs (PPxY motif) span residues 149–152 (PPPY) and 159–161 (PTY). Residues 207–227 (IFMLAFFMAFIFNWLGFCLSF) traverse the membrane as a helical segment. Topologically, residues 228-232 (CITNT) are extracellular. The helical transmembrane segment at 233 to 253 (IAGRYGAICGFGLSLIKWILI) threads the bilayer. The Cytoplasmic segment spans residues 254-262 (VRFSDYFTG). The chain crosses the membrane as a helical span at residues 263–283 (YFNGQYWLWWIFLVLGLLLFF). Over 284–311 (RGFVNYLKVRNMSESMAAAHRTRYFFLL) the chain is Extracellular.

As to quaternary structure, forms heterodimers with NDFIP1. Interacts with HECT domain-containing E3 ubiquitin-protein ligases, including NEDD4. Interacts with NEDD4L. When phosphorylated at Tyr-142, interacts with SRC and LYN SH2 domain. May thus act as a scaffold that recruits SRC to NDFIP1, enhancing NDFIP1 phosphorylation. Interacts with SLC11A2/DMT1. May interact with phosphorylated EGFR. Interacts with KCNH2. Ubiquitinated by NEDD4 and NEDD4L; which does not affect turnover. Also ubiquitinated by ITCH. Post-translationally, undergoes transient tyrosine-phosphorylation following EGF stimulation, most probably catalyzed by SRC. Phosphorylation on Tyr-126, Tyr-146 and Tyr-152 are dependent on the phosphorylation on Tyr-142. Also phosphorylated by LYN and FYN. Ubiquitously expressed, with highest levels in brain, liver, kidney and testis.

It is found in the endosome membrane. It localises to the golgi apparatus membrane. The protein localises to the endosome. Its subcellular location is the multivesicular body membrane. Its function is as follows. Activates HECT domain-containing E3 ubiquitin-protein ligases, including ITCH, NEDD4, NEDD4L, SMURF2, WWP1 and WWP2, and consequently modulates the stability of their targets. As a result, may control many cellular processes. Recruits ITCH, NEDD4 and SMURF2 to endosomal membranes. Negatively regulates KCNH2 potassium channel activity by decreasing its cell-surface expression and interfering with channel maturation through recruitment of NEDD4L to the Golgi apparatus and multivesicular body where it mediates KCNH2 degradation. May modulate EGFR signaling. Together with NDFIP1, limits the cytokine signaling and expansion of effector Th2 T-cells by promoting degradation of JAK1, probably by ITCH- and NEDD4L-mediated ubiquitination. This is NEDD4 family-interacting protein 2 (Ndfip2) from Mus musculus (Mouse).